We begin with the raw amino-acid sequence, 218 residues long: Deoxyribose-phosphate aldolase (218 aa).

Catalysis depends on aspartate 89, which acts as the Proton donor/acceptor. Lysine 152 serves as the catalytic Schiff-base intermediate with acetaldehyde. Lysine 182 serves as the catalytic Proton donor/acceptor.

Belongs to the DeoC/FbaB aldolase family. DeoC type 1 subfamily.

Its subcellular location is the cytoplasm. It catalyses the reaction 2-deoxy-D-ribose 5-phosphate = D-glyceraldehyde 3-phosphate + acetaldehyde. The protein operates within carbohydrate degradation; 2-deoxy-D-ribose 1-phosphate degradation; D-glyceraldehyde 3-phosphate and acetaldehyde from 2-deoxy-alpha-D-ribose 1-phosphate: step 2/2. In terms of biological role, catalyzes a reversible aldol reaction between acetaldehyde and D-glyceraldehyde 3-phosphate to generate 2-deoxy-D-ribose 5-phosphate. This chain is Deoxyribose-phosphate aldolase, found in Corynebacterium diphtheriae (strain ATCC 700971 / NCTC 13129 / Biotype gravis).